The chain runs to 159 residues: Nucleotide-binding protein PST_3153 (159 aa).

It belongs to the YajQ family.

Nucleotide-binding protein. In Stutzerimonas stutzeri (strain A1501) (Pseudomonas stutzeri), this protein is Nucleotide-binding protein PST_3153.